Consider the following 922-residue polypeptide: Neuropilin-1 (922 aa).

The signal sequence occupies residues 1-21; sequence MERGLPLLCATLALALALAGA. At 22-855 the chain is on the extracellular side; the sequence is FRSDKCGGTI…PGNVLKTLDP (834 aa). 3 disulfides stabilise this stretch: Cys27/Cys54, Cys82/Cys104, and Cys147/Cys173. CUB domains follow at residues 27–141 and 147–265; these read CGGT…YEIF and CSQN…YSVL. Asn150 carries N-linked (GlcNAc...) asparagine glycosylation. The Ca(2+) site is built by Glu195, Asp209, and Asp250. Residues Cys206 and Cys228 are joined by a disulfide bond. N-linked (GlcNAc...) asparagine glycosylation is found at Asn261, Asn300, and Asn522. Disulfide bonds link Cys275/Cys424 and Cys431/Cys583. F5/8 type C domains follow at residues 275-424 and 431-583; these read CMEA…VYGC and CSGM…LLGC. O-linked (Xyl...) (chondroitin sulfate) serine; alternate glycosylation is present at Ser612. Residue Ser612 is glycosylated (O-linked (Xyl...) (heparan sulfate) serine; alternate). The MAM domain occupies 645-811; sequence TYGFNCEFGW…NHIPQEDCAK (167 aa). O-linked (Xyl...) (chondroitin sulfate) serine glycosylation is present at Ser829. N-linked (GlcNAc...) asparagine glycosylation is present at Asn841. Residues 856-880 traverse the membrane as a helical segment; it reads ILITIIAMSALGVLLGAVCGVVLYC. The Cytoplasmic portion of the chain corresponds to 881-922; it reads ACWHNGMSERNLSALENYNFELVDGVKLKKDKLNPQSNYSEA. Residue Ser893 is modified to Phosphoserine.

Belongs to the neuropilin family. As to quaternary structure, homodimer, and heterodimer with NRP2. Binds PLXNB1. Interacts with FER. Interacts with VEGFA. Interacts with ABCB8/MITOSUR in mitochondria. As to expression, found in the embryonic nervous system. Expressed in dorsal root ganglia.

Its subcellular location is the mitochondrion membrane. The protein localises to the cell membrane. The protein resides in the cytoplasm. Functionally, cell-surface receptor involved in the development of the cardiovascular system, in angiogenesis, in the formation of certain neuronal circuits and in organogenesis outside the nervous system. Mediates the chemorepulsant activity of semaphorins. Recognizes a C-end rule (CendR) motif R/KXXR/K on its ligands which causes cellular internalization and vascular leakage. It binds to semaphorin 3A, the PLGF-2 isoform of PGF, the VEGF165 isoform of VEGFA and VEGFB. Coexpression with KDR results in increased VEGF165 binding to KDR as well as increased chemotaxis. Regulates VEGF-induced angiogenesis. Binding to VEGFA initiates a signaling pathway needed for motor neuron axon guidance and cell body migration, including for the caudal migration of facial motor neurons from rhombomere 4 to rhombomere 6 during embryonic development. Regulates mitochondrial iron transport via interaction with ABCB8/MITOSUR. The chain is Neuropilin-1 (Nrp1) from Rattus norvegicus (Rat).